Reading from the N-terminus, the 173-residue chain is Pathogenesis-related protein 1C (173 aa).

The N-terminal stretch at 1-20 is a signal peptide; it reads MSTSAVLFLLLAVFAAGASA.

The protein belongs to the thaumatin family.

This Hordeum vulgare (Barley) protein is Pathogenesis-related protein 1C.